We begin with the raw amino-acid sequence, 519 residues long: Putative glucosylceramidase 4 (519 aa).

An N-terminal signal peptide occupies residues 1 to 24 (MILNISVSLLIFLAFYGFSSDAKS). The active-site Proton donor is glutamate 256. The active-site Nucleophile is the glutamate 361.

Belongs to the glycosyl hydrolase 30 family.

The enzyme catalyses a beta-D-glucosylceramide + H2O = an N-acyl-sphingoid base + D-glucose. It catalyses the reaction a beta-D-glucosyl-(1&lt;-&gt;1')-N-acylsphing-4-enine + H2O = an N-acylsphing-4-enine + D-glucose. The catalysed reaction is an N-acyl-1-beta-D-glucosyl-15-methylhexadecasphing-4-enine + H2O = an N-acyl-15-methylhexadecasphing-4-enine + D-glucose. The protein operates within lipid metabolism; sphingolipid metabolism. Glucosylceramidase that catalyzes the hydrolysis of glucosylceramides into free ceramides and glucose. C.elegans contains specific sphingoid bases, which are unique or different in structure compared to the sphingoid bases found in other animals. Two examples of these distinctive compounds are: 15-methylhexadecasphinganine and 15-methylhexadecasphing-4-enine. The chain is Putative glucosylceramidase 4 (gba-4) from Caenorhabditis elegans.